The following is a 203-amino-acid chain: MLSSFPVSATQLGDTIAAVLGDKVKSLKIALGEVTVTVGAADYLASAVLLRDAAGCRFEQLIDLCGLDYSEYKDGQYDGLRYCVASHLLSVSLNQRVRLKVFCPDDDFPVVDSVNGVWNSANWFEREAFDLYGIIFEGHNDLRRILTDYGFIGHPFRKDFPTTGYVEMRYDAEQKRVIYQPVTIEPREITPRVIREDNYGGLQ.

This sequence belongs to the complex I 30 kDa subunit family. As to quaternary structure, NDH-1 is composed of 14 different subunits. Subunits NuoB, C, D, E, F, and G constitute the peripheral sector of the complex.

The protein localises to the cell inner membrane. It catalyses the reaction a quinone + NADH + 5 H(+)(in) = a quinol + NAD(+) + 4 H(+)(out). Its function is as follows. NDH-1 shuttles electrons from NADH, via FMN and iron-sulfur (Fe-S) centers, to quinones in the respiratory chain. The immediate electron acceptor for the enzyme in this species is believed to be ubiquinone. Couples the redox reaction to proton translocation (for every two electrons transferred, four hydrogen ions are translocated across the cytoplasmic membrane), and thus conserves the redox energy in a proton gradient. The sequence is that of NADH-quinone oxidoreductase subunit C from Polaromonas sp. (strain JS666 / ATCC BAA-500).